The sequence spans 596 residues: NADH-quinone oxidoreductase subunit C/D (596 aa).

The tract at residues 1-186 (MVDIMCNDST…NPFILTKQKE (186 aa)) is NADH dehydrogenase I subunit C. Residues 210–596 (NFMFLNLGPN…IDFVMSDVDR (387 aa)) are NADH dehydrogenase I subunit D.

In the N-terminal section; belongs to the complex I 30 kDa subunit family. The protein in the C-terminal section; belongs to the complex I 49 kDa subunit family. As to quaternary structure, NDH-1 is composed of 13 different subunits. Subunits NuoB, CD, E, F, and G constitute the peripheral sector of the complex.

The protein resides in the cell inner membrane. It carries out the reaction a quinone + NADH + 5 H(+)(in) = a quinol + NAD(+) + 4 H(+)(out). Functionally, NDH-1 shuttles electrons from NADH, via FMN and iron-sulfur (Fe-S) centers, to quinones in the respiratory chain. The immediate electron acceptor for the enzyme in this species is believed to be ubiquinone. Couples the redox reaction to proton translocation (for every two electrons transferred, four hydrogen ions are translocated across the cytoplasmic membrane), and thus conserves the redox energy in a proton gradient. This chain is NADH-quinone oxidoreductase subunit C/D, found in Blochmanniella pennsylvanica (strain BPEN).